The chain runs to 221 residues: N-(5'-phosphoribosyl)anthranilate isomerase (221 aa).

Belongs to the TrpF family.

The enzyme catalyses N-(5-phospho-beta-D-ribosyl)anthranilate = 1-(2-carboxyphenylamino)-1-deoxy-D-ribulose 5-phosphate. The protein operates within amino-acid biosynthesis; L-tryptophan biosynthesis; L-tryptophan from chorismate: step 3/5. This is N-(5'-phosphoribosyl)anthranilate isomerase from Chlorobaculum tepidum (strain ATCC 49652 / DSM 12025 / NBRC 103806 / TLS) (Chlorobium tepidum).